The primary structure comprises 441 residues: ATP-dependent protease ATPase subunit HslU (441 aa).

ATP is bound by residues Ile18, 60 to 65, Asp254, Glu319, and Arg391; that span reads GVGKTE.

It belongs to the ClpX chaperone family. HslU subfamily. As to quaternary structure, a double ring-shaped homohexamer of HslV is capped on each side by a ring-shaped HslU homohexamer. The assembly of the HslU/HslV complex is dependent on binding of ATP.

It is found in the cytoplasm. Functionally, ATPase subunit of a proteasome-like degradation complex; this subunit has chaperone activity. The binding of ATP and its subsequent hydrolysis by HslU are essential for unfolding of protein substrates subsequently hydrolyzed by HslV. HslU recognizes the N-terminal part of its protein substrates and unfolds these before they are guided to HslV for hydrolysis. The chain is ATP-dependent protease ATPase subunit HslU from Actinobacillus succinogenes (strain ATCC 55618 / DSM 22257 / CCUG 43843 / 130Z).